The primary structure comprises 462 residues: Centrosomal protein of 55 kDa (462 aa).

Basic and acidic residues predominate over residues 1–11 (MSSRSPKDLIK). Residues 1 to 26 (MSSRSPKDLIKSKWGSRPSSSKSDTA) form a disordered region. Residues 12–23 (SKWGSRPSSSKS) show a composition bias toward low complexity. A coiled-coil region spans residues 50 to 400 (KMAEKGRSRL…TQLESLKQLH (351 aa)). Phosphoserine occurs at positions 96 and 99. Residues 157–235 (ANCFNSSMNS…EGYLQVEKQK (79 aa)) are interaction with TSG101. The interval 160–214 (FNSSMNSIHEKEMQLKDALEKNQQWLVYDQQREAYVKGLLAKIFELEKRTETAAA) is interaction with PDCD6IP. The interval 354 to 462 (QMQACTLDFE…LLVHVEYCMK (109 aa)) is required for localization to the interphase centrosome and to the midbody during cytokinesis. The segment at 410 to 430 (PLQREPESRVKATSPKSPSAA) is disordered. A phosphoserine mark is found at serine 423, serine 426, and serine 428. Serine 434 bears the Phosphoserine; by PLK1 mark.

As to quaternary structure, homodimer. Interacts (phosphorylated on Ser-423 and Ser-426) with PLK1; the interaction is indirect via the MTMR3:MTMR4 heterooligomer, occurs during early mitosis, regulates the phosphorylation of CEP55 by PLK1 and its recruitment to the midbody where it can mediate cell abscission. Interacts with AKAP9/CG-NAP; the interaction occurs in interphase and is lost upon mitotic entry. Interacts with PCNT/Kendrin; the interaction occurs in interphase and is lost upon mitotic entry. Directly interacts with PDCD6IP; this interaction is required for PDCD6IP targeting to the midbody; CEP55 binds PDCD6IP in a 2:1 stoichiometry; PDCD6IP competes with TSG101 for the same binding site. Interacts with TSG101; TSG101 competes with PDCD6IP for the same binding site; interaction is required for cytokinesis. Interacts with MVB12A, VPS37B, VPS37C and VPS28. In terms of processing, there is a hierachy of phosphorylation, where both Ser-423 and Ser-426 are phosphorylated at the onset of mitosis, prior to Ser-434. Phosphorylation at Ser-423 and Ser-426 is required for dissociation from the centrosome at the G2/M boundary. Phosphorylation at the 3 sites, Ser-423, Ser-426 and Ser-434, is required for protein function at the final stages of cell division to complete cytokinesis successfully.

The protein resides in the cytoplasm. The protein localises to the cytoskeleton. Its subcellular location is the microtubule organizing center. It is found in the centrosome. It localises to the centriole. The protein resides in the cleavage furrow. The protein localises to the midbody. Its subcellular location is the midbody ring. Plays a role in mitotic exit and cytokinesis. Recruits PDCD6IP and TSG101 to midbody during cytokinesis. Required for successful completion of cytokinesis. Not required for microtubule nucleation. Plays a role in the development of the brain and kidney. In Mus musculus (Mouse), this protein is Centrosomal protein of 55 kDa.